The sequence spans 300 residues: Ribosomal protein L11 methyltransferase (300 aa).

S-adenosyl-L-methionine contacts are provided by threonine 152, glycine 173, aspartate 195, and asparagine 234.

Belongs to the methyltransferase superfamily. PrmA family.

It localises to the cytoplasm. It catalyses the reaction L-lysyl-[protein] + 3 S-adenosyl-L-methionine = N(6),N(6),N(6)-trimethyl-L-lysyl-[protein] + 3 S-adenosyl-L-homocysteine + 3 H(+). Methylates ribosomal protein L11. In Burkholderia pseudomallei (strain K96243), this protein is Ribosomal protein L11 methyltransferase.